A 149-amino-acid polypeptide reads, in one-letter code: MADQLTEEQIAEFKEAFSLFDKDGDGTITTKELGTVMRSLGQNPTEAELQDMINEVDADGNGTIDFPEFLTMMAKKMKDTDSEEEIREAFRVFDKDGNGYISAAELRHVMTNLGEKLTDEEVDEMIREADIDGDGQVNYEEFVQMMTAK.

A2 is modified (N-acetylalanine). EF-hand domains lie at 8-43 (EQIAEFKEAFSLFDKDGDGTITTKELGTVMRSLGQN), 44-79 (PTEAELQDMINEVDADGNGTIDFPEFLTMMAKKMKD), 81-116 (DSEEEIREAFRVFDKDGNGYISAAELRHVMTNLGEK), and 117-149 (LTDEEVDEMIREADIDGDGQVNYEEFVQMMTAK). 15 residues coordinate Ca(2+): D21, D23, D25, T27, E32, D57, D59, N61, T63, E68, D94, D96, N98, Y100, and E105. The residue at position 116 (K116) is an N6,N6,N6-trimethyllysine. Residues D130, D132, D134, Q136, and E141 each contribute to the Ca(2+) site.

It belongs to the calmodulin family.

Functionally, calmodulin acts as part of a calcium signal transduction pathway by mediating the control of a large number of enzymes, ion channels, aquaporins and other proteins through calcium-binding. Calcium-binding is required for the activation of calmodulin. Among the enzymes to be stimulated by the calmodulin-calcium complex are a number of protein kinases, such as myosin light-chain kinases and calmodulin-dependent protein kinase type II (CaMK2), and phosphatases. The polypeptide is Calmodulin (calm) (Electrophorus electricus (Electric eel)).